The chain runs to 197 residues: Probable GTP-binding protein EngB (197 aa).

The EngB-type G domain maps to 22–195 (QLPELALAGR…WRTILNHLKV (174 aa)). Residues 30 to 37 (GRSNVGKS), 57 to 61 (GKTQT), 75 to 78 (DVPG), 142 to 145 (TKAD), and 174 to 176 (FSS) contribute to the GTP site. Residues Ser37 and Thr59 each contribute to the Mg(2+) site.

Belongs to the TRAFAC class TrmE-Era-EngA-EngB-Septin-like GTPase superfamily. EngB GTPase family. It depends on Mg(2+) as a cofactor.

In terms of biological role, necessary for normal cell division and for the maintenance of normal septation. The protein is Probable GTP-binding protein EngB of Shouchella clausii (strain KSM-K16) (Alkalihalobacillus clausii).